The following is a 100-amino-acid chain: Large ribosomal subunit protein bL28 (100 aa).

This sequence belongs to the bacterial ribosomal protein bL28 family.

This is Large ribosomal subunit protein bL28 from Gluconacetobacter diazotrophicus (strain ATCC 49037 / DSM 5601 / CCUG 37298 / CIP 103539 / LMG 7603 / PAl5).